The sequence spans 305 residues: Probable xyloglucan endotransglucosylase/hydrolase protein 21 (305 aa).

Residues 1-25 (MVSSTLLVMSISLFLGLSILLVVHG) form the signal peptide. The GH16 domain maps to 26 to 216 (KDFNQDIDIT…WSQGPFVASF (191 aa)). A glycan (N-linked (GlcNAc...) asparagine) is linked at Asn-46. The active-site Nucleophile is Glu-102. Catalysis depends on Glu-106, which acts as the Proton donor. Glu-106 is a binding site for xyloglucan. N-linked (GlcNAc...) asparagine glycosylation is present at Asn-110. Xyloglucan contacts are provided by residues 119–121 (HTN) and 129–131 (DRE). N-linked (GlcNAc...) asparagine glycosylation is present at Asn-146. Xyloglucan contacts are provided by residues 195–196 (DW) and Gly-200. Asn-206 and Asn-231 each carry an N-linked (GlcNAc...) asparagine glycan. Cystine bridges form between Cys-225/Cys-239 and Cys-282/Cys-296. The span at 236-253 (TSPCSPGDSTSSSSSSTS) shows a compositional bias: low complexity. The tract at residues 236–258 (TSPCSPGDSTSSSSSSTSEWFSQ) is disordered. Arg-287 contributes to the xyloglucan binding site.

It belongs to the glycosyl hydrolase 16 family. XTH group 2 subfamily. Post-translationally, contains at least one intrachain disulfide bond essential for its enzymatic activity. In terms of tissue distribution, predominantly expressed in green siliques.

Its subcellular location is the secreted. The protein resides in the cell wall. The protein localises to the extracellular space. It is found in the apoplast. The enzyme catalyses breaks a beta-(1-&gt;4) bond in the backbone of a xyloglucan and transfers the xyloglucanyl segment on to O-4 of the non-reducing terminal glucose residue of an acceptor, which can be a xyloglucan or an oligosaccharide of xyloglucan.. In terms of biological role, catalyzes xyloglucan endohydrolysis (XEH) and/or endotransglycosylation (XET). Cleaves and religates xyloglucan polymers, an essential constituent of the primary cell wall, and thereby participates in cell wall construction of growing tissues. This Arabidopsis thaliana (Mouse-ear cress) protein is Probable xyloglucan endotransglucosylase/hydrolase protein 21 (XTH21).